A 588-amino-acid chain; its full sequence is DNA mismatch repair protein MutL (588 aa).

It belongs to the DNA mismatch repair MutL/HexB family.

Its function is as follows. This protein is involved in the repair of mismatches in DNA. It is required for dam-dependent methyl-directed DNA mismatch repair. May act as a 'molecular matchmaker', a protein that promotes the formation of a stable complex between two or more DNA-binding proteins in an ATP-dependent manner without itself being part of a final effector complex. In Fervidobacterium nodosum (strain ATCC 35602 / DSM 5306 / Rt17-B1), this protein is DNA mismatch repair protein MutL.